The following is a 360-amino-acid chain: DNA replication and repair protein RecF (360 aa).

ATP is bound at residue 30–37 (GQNGSGKT).

The protein belongs to the RecF family.

It localises to the cytoplasm. Its function is as follows. The RecF protein is involved in DNA metabolism; it is required for DNA replication and normal SOS inducibility. RecF binds preferentially to single-stranded, linear DNA. It also seems to bind ATP. The polypeptide is DNA replication and repair protein RecF (Shewanella sp. (strain MR-7)).